A 1500-amino-acid chain; its full sequence is ABC transporter G family member 42 (1500 aa).

The disordered stretch occupies residues 26 to 56; it reads VDEAFMPQNSGGGGGSRGRRRSGRGGTADDD. The ABC transporter 1 domain occupies 182–455; the sequence is LGLVGVRPGR…FESCGFRCPE (274 aa). 215–222 is an ATP binding site; it reads GPPSSGKT. Residues 533–746 enclose the ABC transmembrane type-2 1 domain; it reads ELLKASFAKE…GYNALAVNEF (214 aa). A run of 7 helical transmembrane segments spans residues 551–571, 584–604, 639–659, 670–690, 695–715, 724–744, and 783–803; these read FVYI…STVF, GFVY…NGFA, IPFS…TIGF, LLLV…TAGL, IIAQ…GGFL, WWIW…LAVN, and FWIG…LFTL. Positions 822–834 are enriched in basic and acidic residues; that stretch reads TAKEAEGNGDARH. The interval 822 to 850 is disordered; it reads TAKEAEGNGDARHTVRNGSTKSNGGNHKE. Polar residues predominate over residues 837–846; it reads RNGSTKSNGG. The region spanning 894–1151 is the ABC transporter 2 domain; sequence MSFDDVNYYV…KMIEYFEAIP (258 aa). Residue 939-946 coordinates ATP; it reads GVSGAGKT. Positions 1224-1438 constitute an ABC transmembrane type-2 2 domain; it reads GQFRACLWKQ…TVYGLIVTQY (215 aa). 7 helical membrane passes run 1245-1265, 1277-1297, 1331-1351, 1358-1378, 1388-1408, 1416-1436, and 1472-1492; these read LVRF…FWKI, MVIG…CATV, IPYV…MMSF, FFWF…YGMM, VAAI…GFFI, WWIW…LIVT, and VVAP…AICI.

It belongs to the ABC transporter superfamily. ABCG family. PDR (TC 3.A.1.205) subfamily.

It localises to the membrane. Functionally, may be a general defense protein. This is ABC transporter G family member 42 from Oryza sativa subsp. japonica (Rice).